We begin with the raw amino-acid sequence, 121 residues long: Small ribosomal subunit protein uS13 (121 aa).

A disordered region spans residues 91 to 121 (HRRGLPVRGQNTKNNARTRKGPRKTVANKKK). Residues 106–121 (ARTRKGPRKTVANKKK) show a composition bias toward basic residues.

The protein belongs to the universal ribosomal protein uS13 family. Part of the 30S ribosomal subunit. Forms a loose heterodimer with protein S19. Forms two bridges to the 50S subunit in the 70S ribosome.

Its function is as follows. Located at the top of the head of the 30S subunit, it contacts several helices of the 16S rRNA. In the 70S ribosome it contacts the 23S rRNA (bridge B1a) and protein L5 of the 50S subunit (bridge B1b), connecting the 2 subunits; these bridges are implicated in subunit movement. Contacts the tRNAs in the A and P-sites. This Lysinibacillus sphaericus (strain C3-41) protein is Small ribosomal subunit protein uS13.